Here is a 189-residue protein sequence, read N- to C-terminus: Ras-like protein 1 (189 aa).

10-17 is a GTP binding site; that stretch reads GAGGVGKS. Residues 32-40 carry the Effector region motif; sequence YDPTIEDSY. GTP contacts are provided by residues 57-61 and 116-119; these read DTAGQ and NKCD. Residue cysteine 186 is modified to Cysteine methyl ester. The S-geranylgeranyl cysteine moiety is linked to residue cysteine 186. Residues 187 to 189 constitute a propeptide, removed in mature form; that stretch reads KML.

It belongs to the small GTPase superfamily. Ras family.

It localises to the cell membrane. The catalysed reaction is GTP + H2O = GDP + phosphate + H(+). Alternates between an inactive form bound to GDP and an active form bound to GTP. Activated by a guanine nucleotide-exchange factor (GEF) and inactivated by a GTPase-activating protein (GAP). Its function is as follows. Ras proteins bind GDP/GTP and possess intrinsic GTPase activity. Plays a role in eye development by regulating cell growth, survival of postmitotic ommatidial cells and differentiation of photoreceptor cells. During larval development, mediates Ptth/tor signaling leading to the production of ecdysone, a hormone required for the initiation of metamorphosis. The sequence is that of Ras-like protein 1 from Drosophila willistoni (Fruit fly).